Reading from the N-terminus, the 676-residue chain is MSDAVNVRKAIEELRREINRHNTLYYVDARPEISDYEFDRLMERLIELEKAFPDFVTPDSPSHRVGGAITREFPSVRHREPMLSLSNTYSLAEVEDFYSRVKKLLLVEGVREQDMAAELKFDGVAISLLYRDGLLVQGATRGDGTEGDDITTNLKTLSSVPLRIPLTSLPVIEGIERDIEIRGEVFMQKDDFARLNEARPEEDRFANPRNATAGTLKLQDSGEVARRRLNFVAYYLRLSSQDSFLLTQYDRLELLGQLGFFTGKHYRLCRDMKEIGDFIGYWAVERWNLPYETDGVVLKLNDVALWPRIGATAKSPRWAIAYKYPAQQAKTVLQGVAFQVGRLGTVTPVAELEPVRLAGSTVSRSTLHNFDEIERLGLMLHDRVIIEKSGEVIPKVIRVVLDERPENAEPVGVPSVCPECGASLEKPENEVSYYCPDQDSCPAQIRGRLLHFASRNALDIQSLGESLVAQLVQKGLVRDAGDLYLLQQPQLEALERMGRKSAHNLLRALQESREKSYERLLYALGIRHVGQATARELARAYETVEALQNASEEELATVPDVGPVVAHSVKDYFSKSSTQMLLRKLRDAGFPLRFTGPQKLINRNFEGVNVLFTGALERYGRQQASELVQQRGGRVVGSVSRSTGVVVAGSEPGSKLDKARKLGVKVISEDEFNAML.

Residues 35 to 39, 84 to 85, and E118 each bind NAD(+); these read DYEFD and SL. K120 serves as the catalytic N6-AMP-lysine intermediate. Positions 141, 184, 299, and 323 each coordinate NAD(+). Positions 417, 420, 435, and 441 each coordinate Zn(2+). One can recognise a BRCT domain in the interval 600–676; that stretch reads LINRNFEGVN…ISEDEFNAML (77 aa).

It belongs to the NAD-dependent DNA ligase family. LigA subfamily. Requires Mg(2+) as cofactor. Mn(2+) is required as a cofactor.

The enzyme catalyses NAD(+) + (deoxyribonucleotide)n-3'-hydroxyl + 5'-phospho-(deoxyribonucleotide)m = (deoxyribonucleotide)n+m + AMP + beta-nicotinamide D-nucleotide.. Functionally, DNA ligase that catalyzes the formation of phosphodiester linkages between 5'-phosphoryl and 3'-hydroxyl groups in double-stranded DNA using NAD as a coenzyme and as the energy source for the reaction. It is essential for DNA replication and repair of damaged DNA. In Chlorobium phaeobacteroides (strain DSM 266 / SMG 266 / 2430), this protein is DNA ligase.